Consider the following 182-residue polypeptide: MQTEHVILLNAQGVPTGTLEKYAAHTADTLLHLAFSSWLFNAKGQLLVTRRALSKKAWPGVWTNSVCGHPQLGESNEDAVIRRCRYELGVEITPPESIYPDFRYRATDPNGIVENEVCPVFAARTTSALQINDDEVMDYQWCDLADVLHGIDATPWAFSPWMVMQAANSEARKLLSAFAQHN.

Mn(2+) is bound by residues His-25 and His-32. The region spanning Leu-30–Met-164 is the Nudix hydrolase domain. Cys-67 is a catalytic residue. A Mn(2+)-binding site is contributed by His-69. Glu-87 provides a ligand contact to Mg(2+). Residues Glu-114 and Glu-116 each contribute to the Mn(2+) site. Residue Glu-116 is part of the active site.

The protein belongs to the IPP isomerase type 1 family. Homodimer. It depends on Mg(2+) as a cofactor. Mn(2+) serves as cofactor.

Its subcellular location is the cytoplasm. It carries out the reaction isopentenyl diphosphate = dimethylallyl diphosphate. Its pathway is isoprenoid biosynthesis; dimethylallyl diphosphate biosynthesis; dimethylallyl diphosphate from isopentenyl diphosphate: step 1/1. Functionally, catalyzes the 1,3-allylic rearrangement of the homoallylic substrate isopentenyl (IPP) to its highly electrophilic allylic isomer, dimethylallyl diphosphate (DMAPP). In Escherichia coli (strain SMS-3-5 / SECEC), this protein is Isopentenyl-diphosphate Delta-isomerase.